A 506-amino-acid chain; its full sequence is Maturase K (506 aa).

It belongs to the intron maturase 2 family. MatK subfamily.

The protein resides in the plastid. The protein localises to the chloroplast. Functionally, usually encoded in the trnK tRNA gene intron. Probably assists in splicing its own and other chloroplast group II introns. The polypeptide is Maturase K (Austrosteenisia blackii (Blood vine)).